Consider the following 280-residue polypeptide: Ribonuclease Z (280 aa).

Residues H61, H63, D65, H66, H153, D176, and H240 each contribute to the Zn(2+) site. D65 acts as the Proton acceptor in catalysis.

It belongs to the RNase Z family. Homodimer. Zn(2+) serves as cofactor.

It catalyses the reaction Endonucleolytic cleavage of RNA, removing extra 3' nucleotides from tRNA precursor, generating 3' termini of tRNAs. A 3'-hydroxy group is left at the tRNA terminus and a 5'-phosphoryl group is left at the trailer molecule.. Its function is as follows. Zinc phosphodiesterase, which displays some tRNA 3'-processing endonuclease activity. Probably involved in tRNA maturation, by removing a 3'-trailer from precursor tRNA. The chain is Ribonuclease Z from Mycobacterium avium (strain 104).